The primary structure comprises 364 residues: Adenine deaminase (364 aa).

His-25, His-27, and His-221 together coordinate Zn(2+). The active-site Proton donor is Glu-224. Position 301 (Asp-301) interacts with Zn(2+). Asp-302 lines the substrate pocket.

Belongs to the metallo-dependent hydrolases superfamily. Adenosine and AMP deaminases family. Adenine deaminase type 2 subfamily. Zn(2+) is required as a cofactor.

It is found in the cytoplasm. The protein localises to the nucleus. It carries out the reaction adenine + H2O + H(+) = hypoxanthine + NH4(+). Catalyzes the hydrolytic deamination of adenine to hypoxanthine. Plays an important role in the purine salvage pathway and in nitrogen catabolism. Has no activity with adenosine as a substrate. In Emericella nidulans (strain FGSC A4 / ATCC 38163 / CBS 112.46 / NRRL 194 / M139) (Aspergillus nidulans), this protein is Adenine deaminase (aah1).